Consider the following 368-residue polypeptide: Peptide chain release factor 2 (368 aa).

N5-methylglutamine is present on Gln250.

This sequence belongs to the prokaryotic/mitochondrial release factor family. In terms of processing, methylated by PrmC. Methylation increases the termination efficiency of RF2.

Its subcellular location is the cytoplasm. In terms of biological role, peptide chain release factor 2 directs the termination of translation in response to the peptide chain termination codons UGA and UAA. The polypeptide is Peptide chain release factor 2 (Rickettsia bellii (strain RML369-C)).